The following is a 213-amino-acid chain: MKPIKALTARQQEVFNFLKHHIETTGMPPTRAEISRELGFRSPNAAEEYLKALARKGVVEILSGTSRGIRLLVDTEESANDEDAGLPLIGRVAAGEPILAEQHIEGTYKVDADMFKPQADFLLKVYGQSMKDIGILDGDLLAVHSTKDVRNGQVIVARIEDEVTVKRLERKGDVVYLHAENEEFKPIVVNLKEQPNFEIEGIAVGIIRNNAWM.

The H-T-H motif DNA-binding region spans 31 to 51; the sequence is RAEISRELGFRSPNAAEEYLK. Active-site for autocatalytic cleavage activity residues include S129 and K166.

The protein belongs to the peptidase S24 family. Homodimer.

The enzyme catalyses Hydrolysis of Ala-|-Gly bond in repressor LexA.. Functionally, represses a number of genes involved in the response to DNA damage (SOS response), including recA and lexA. In the presence of single-stranded DNA, RecA interacts with LexA causing an autocatalytic cleavage which disrupts the DNA-binding part of LexA, leading to derepression of the SOS regulon and eventually DNA repair. This chain is LexA repressor, found in Mannheimia succiniciproducens (strain KCTC 0769BP / MBEL55E).